The primary structure comprises 254 residues: 3-deoxy-manno-octulosonate cytidylyltransferase (254 aa).

Belongs to the KdsB family.

The protein localises to the cytoplasm. The catalysed reaction is 3-deoxy-alpha-D-manno-oct-2-ulosonate + CTP = CMP-3-deoxy-beta-D-manno-octulosonate + diphosphate. It functions in the pathway nucleotide-sugar biosynthesis; CMP-3-deoxy-D-manno-octulosonate biosynthesis; CMP-3-deoxy-D-manno-octulosonate from 3-deoxy-D-manno-octulosonate and CTP: step 1/1. The protein operates within bacterial outer membrane biogenesis; lipopolysaccharide biosynthesis. In terms of biological role, activates KDO (a required 8-carbon sugar) for incorporation into bacterial lipopolysaccharide in Gram-negative bacteria. This chain is 3-deoxy-manno-octulosonate cytidylyltransferase, found in Nitrobacter winogradskyi (strain ATCC 25391 / DSM 10237 / CIP 104748 / NCIMB 11846 / Nb-255).